Here is a 331-residue protein sequence, read N- to C-terminus: Cytoskeleton protein RodZ (331 aa).

The Cytoplasmic portion of the chain corresponds to 1 to 111 (MNTEATQDHQ…LGKRRKKRDG (111 aa)). The region spanning 19–71 (LRHAREQLGLSQQAVAERLCLKVSTVRDIEDDKAPADLASTFLRGYIRSYARL) is the HTH cro/C1-type domain. The H-T-H motif DNA-binding region spans 30 to 49 (QQAVAERLCLKVSTVRDIED). The chain crosses the membrane as a helical; Signal-anchor for type II membrane protein span at residues 112 to 132 (WLMSFTWLVLFVVIGLSGAWW). The Periplasmic portion of the chain corresponds to 133-331 (WQDHKAQQEE…TLNAESSPAQ (199 aa)). Polar residues predominate over residues 146–166 (MADQSSAELNGGDANSQNVPL). Residues 146 to 238 (MADQSSAELN…ASPLPTDQAN (93 aa)) are disordered. Low complexity-rich tracts occupy residues 167-202 (DTSAPAAPTADSAANSAPTDTASAPTTSAPAQTPAD) and 216-234 (TAGTTPAAPATTPASPLPT).

Belongs to the RodZ family.

The protein localises to the cell inner membrane. Its function is as follows. Cytoskeletal protein that is involved in cell-shape control through regulation of the length of the long axis. This chain is Cytoskeleton protein RodZ, found in Klebsiella pneumoniae subsp. pneumoniae (strain ATCC 700721 / MGH 78578).